A 356-amino-acid chain; its full sequence is 4-hydroxy-2-oxovalerate aldolase (356 aa).

Positions 7–257 (PRVTDTTLRD…NPGLDVFKLM (251 aa)) constitute a Pyruvate carboxyltransferase domain. 15-16 (RD) contacts substrate. A Mn(2+)-binding site is contributed by Asp-16. The Proton acceptor role is filled by His-19. Ser-169 and His-196 together coordinate substrate. Positions 196 and 198 each coordinate Mn(2+). Tyr-287 is a binding site for substrate.

Belongs to the 4-hydroxy-2-oxovalerate aldolase family.

It carries out the reaction (S)-4-hydroxy-2-oxopentanoate = acetaldehyde + pyruvate. This chain is 4-hydroxy-2-oxovalerate aldolase, found in Thermomicrobium roseum (strain ATCC 27502 / DSM 5159 / P-2).